We begin with the raw amino-acid sequence, 295 residues long: uncharacterized protein (295 aa).

This is an uncharacterized protein from Xanthobacter autotrophicus.